A 78-amino-acid chain; its full sequence is Acyl carrier protein (78 aa).

The 76-residue stretch at 2-77 folds into the Carrier domain; it reads SEIAQKVKSI…QAIAYLEQHV (76 aa). Ser-37 is subject to O-(pantetheine 4'-phosphoryl)serine.

It belongs to the acyl carrier protein (ACP) family. Post-translationally, 4'-phosphopantetheine is transferred from CoA to a specific serine of apo-ACP by AcpS. This modification is essential for activity because fatty acids are bound in thioester linkage to the sulfhydryl of the prosthetic group.

The protein resides in the cytoplasm. It participates in lipid metabolism; fatty acid biosynthesis. Its function is as follows. Carrier of the growing fatty acid chain in fatty acid biosynthesis. This Cytophaga hutchinsonii (strain ATCC 33406 / DSM 1761 / CIP 103989 / NBRC 15051 / NCIMB 9469 / D465) protein is Acyl carrier protein.